Reading from the N-terminus, the 3135-residue chain is Gametocyte surface protein P230 (3135 aa).

The N-terminal stretch at Met1–Ser20 is a signal peptide. N-linked (GlcNAc...) asparagine glycosylation is found at Asn76, Asn111, Asn135, and Asn239. The segment at Glu266–Phe470 is disordered. Composition is skewed to acidic residues over residues Val276–Leu321 and Val329–Ser345. Over residues Val346–Glu358 the composition is skewed to basic and acidic residues. 2 stretches are compositionally biased toward acidic residues: residues Asp376–Tyr444 and Gly458–Gly467. Asn585 carries an N-linked (GlcNAc...) asparagine glycan. 6-Cys domains follow at residues Lys589–Tyr730 and Lys733–Glu887. Disulfide bonds link Cys593–Cys611, Cys626–Cys706, Cys737–Cys781, and Cys804–Cys862. Asn821, Asn829, Asn889, Asn961, Asn1079, Asn1089, and Asn1153 each carry an N-linked (GlcNAc...) asparagine glycan. 6-Cys domains follow at residues His918 to Gln1133, Lys1136 to Glu1275, Lys1285 to Arg1432, and Lys1435 to Leu1560. 3 disulfides stabilise this stretch: Cys1140–Cys1161, Cys1175–Cys1251, and Cys1200–Cys1249. N-linked (GlcNAc...) asparagine glycosylation is found at Asn1267, Asn1300, Asn1452, Asn1492, Asn1508, Asn1621, and Asn1624. Intrachain disulfides connect Cys1439/Cys1459, Cys1473/Cys1534, and Cys1483/Cys1532. 4 6-Cys domains span residues Asn1694 to Ser1907, Lys1910 to Asp2035, Asn2052 to Asn2199, and Ser2204 to Arg2374. 2 cysteine pairs are disulfide-bonded: Cys1698/Cys1726 and Cys1740/Cys1881. N-linked (GlcNAc...) asparagine glycans are attached at residues Asn1753, Asn1804, Asn1882, Asn1920, Asn1954, and Asn1972. 4 disulfides stabilise this stretch: Cys1914–Cys1938, Cys1952–Cys2017, Cys1963–Cys2015, and Cys2056–Cys2074. Asn2178 and Asn2199 each carry an N-linked (GlcNAc...) asparagine glycan. 3 disulfides stabilise this stretch: Cys2208-Cys2229, Cys2243-Cys2356, and Cys2254-Cys2354. N-linked (GlcNAc...) asparagine glycosylation is found at Asn2312 and Asn2351. Positions Ile2410–Arg2432 are disordered. Residues Ile2422–Arg2432 show a composition bias toward basic and acidic residues. 9 N-linked (GlcNAc...) asparagine glycosylation sites follow: Asn2439, Asn2457, Asn2466, Asn2504, Asn2586, Asn2611, Asn2650, Asn2677, and Asn2688. 4 consecutive 6-Cys domains span residues Asn2448–Asn2663, Ile2666–Lys2827, Gly2831–Gly2979, and Glu2982–Gln3113. Cystine bridges form between Cys2452–Cys2476 and Cys2490–Cys2638. Disulfide bonds link Cys2670–Cys2706, Cys2720–Cys2804, and Cys2730–Cys2802. N-linked (GlcNAc...) asparagine glycosylation occurs at Asn2952. A disulfide bridge connects residues Cys2986 and Cys3010. Asn3011, Asn3016, Asn3066, Asn3093, and Asn3096 each carry an N-linked (GlcNAc...) asparagine glycan. 2 disulfides stabilise this stretch: Cys3024–Cys3090 and Cys3035–Cys3088.

In terms of assembly, heterodimer; heterodimerizes with PF45/48. Post-translationally, may be processed into a 310 kDa form as the parasite emerges from the host erythrocytes.

It localises to the cell surface. It is found in the cell membrane. Functionally, gametocyte surface protein required for male/female gamete fusion. Also required for male gamete exflagellation and interaction with host erythrocytes. In Plasmodium falciparum (isolate 3D7), this protein is Gametocyte surface protein P230 (PFS230).